Reading from the N-terminus, the 118-residue chain is NADH-quinone oxidoreductase subunit A (118 aa).

A run of 3 helical transmembrane segments spans residues 6–26 (LIIG…LLTA), 61–81 (FMYG…LPWA), and 87–107 (LGLF…IGLW).

Belongs to the complex I subunit 3 family. NDH-1 is composed of 14 different subunits. Subunits NuoA, H, J, K, L, M, N constitute the membrane sector of the complex.

It is found in the cell membrane. It catalyses the reaction a quinone + NADH + 5 H(+)(in) = a quinol + NAD(+) + 4 H(+)(out). Its function is as follows. NDH-1 shuttles electrons from NADH, via FMN and iron-sulfur (Fe-S) centers, to quinones in the respiratory chain. The immediate electron acceptor for the enzyme in this species is believed to be a menaquinone. Couples the redox reaction to proton translocation (for every two electrons transferred, four hydrogen ions are translocated across the cytoplasmic membrane), and thus conserves the redox energy in a proton gradient. This Clostridium beijerinckii (strain ATCC 51743 / NCIMB 8052) (Clostridium acetobutylicum) protein is NADH-quinone oxidoreductase subunit A.